A 232-amino-acid polypeptide reads, in one-letter code: Phosphatidylserine decarboxylase proenzyme (232 aa).

Ser-190 (schiff-base intermediate with substrate; via pyruvic acid) is an active-site residue. At Ser-190 the chain carries Pyruvic acid (Ser); by autocatalysis.

Belongs to the phosphatidylserine decarboxylase family. PSD-A subfamily. Heterodimer of a large membrane-associated beta subunit and a small pyruvoyl-containing alpha subunit. It depends on pyruvate as a cofactor. In terms of processing, is synthesized initially as an inactive proenzyme. Formation of the active enzyme involves a self-maturation process in which the active site pyruvoyl group is generated from an internal serine residue via an autocatalytic post-translational modification. Two non-identical subunits are generated from the proenzyme in this reaction, and the pyruvate is formed at the N-terminus of the alpha chain, which is derived from the carboxyl end of the proenzyme. The post-translation cleavage follows an unusual pathway, termed non-hydrolytic serinolysis, in which the side chain hydroxyl group of the serine supplies its oxygen atom to form the C-terminus of the beta chain, while the remainder of the serine residue undergoes an oxidative deamination to produce ammonia and the pyruvoyl prosthetic group on the alpha chain.

Its subcellular location is the cell membrane. It catalyses the reaction a 1,2-diacyl-sn-glycero-3-phospho-L-serine + H(+) = a 1,2-diacyl-sn-glycero-3-phosphoethanolamine + CO2. It functions in the pathway phospholipid metabolism; phosphatidylethanolamine biosynthesis; phosphatidylethanolamine from CDP-diacylglycerol: step 2/2. Its function is as follows. Catalyzes the formation of phosphatidylethanolamine (PtdEtn) from phosphatidylserine (PtdSer). This Bartonella henselae (strain ATCC 49882 / DSM 28221 / CCUG 30454 / Houston 1) (Rochalimaea henselae) protein is Phosphatidylserine decarboxylase proenzyme.